The sequence spans 182 residues: Translation initiation factor IF-3 (182 aa).

It belongs to the IF-3 family. As to quaternary structure, monomer.

The protein localises to the cytoplasm. Its function is as follows. IF-3 binds to the 30S ribosomal subunit and shifts the equilibrium between 70S ribosomes and their 50S and 30S subunits in favor of the free subunits, thus enhancing the availability of 30S subunits on which protein synthesis initiation begins. The protein is Translation initiation factor IF-3 of Tropheryma whipplei (strain TW08/27) (Whipple's bacillus).